The primary structure comprises 511 residues: Bifunctional purine biosynthesis protein PurH (511 aa).

Residues Met-1–Val-145 form the MGS-like domain.

This sequence belongs to the PurH family.

The enzyme catalyses (6R)-10-formyltetrahydrofolate + 5-amino-1-(5-phospho-beta-D-ribosyl)imidazole-4-carboxamide = 5-formamido-1-(5-phospho-D-ribosyl)imidazole-4-carboxamide + (6S)-5,6,7,8-tetrahydrofolate. The catalysed reaction is IMP + H2O = 5-formamido-1-(5-phospho-D-ribosyl)imidazole-4-carboxamide. The protein operates within purine metabolism; IMP biosynthesis via de novo pathway; 5-formamido-1-(5-phospho-D-ribosyl)imidazole-4-carboxamide from 5-amino-1-(5-phospho-D-ribosyl)imidazole-4-carboxamide (10-formyl THF route): step 1/1. Its pathway is purine metabolism; IMP biosynthesis via de novo pathway; IMP from 5-formamido-1-(5-phospho-D-ribosyl)imidazole-4-carboxamide: step 1/1. The chain is Bifunctional purine biosynthesis protein PurH from Anoxybacillus flavithermus (strain DSM 21510 / WK1).